Consider the following 1025-residue polypeptide: MKFFALFIYRPVATILLSVAITLCGILGFRMLPVAPLPQVDFPVIMVSASLPGASPETMASSVATPLERSLGRIAGVSEMTSSSSLGSTRIILQFDFDRDINGAARDVQAAINAAQSLLPSGMPSRPTYRKANPSDAPIMILTLTSDTYSQGELYDFASTQLAPTISQIDGVGDVDVGGSSLPAVRVGLNPQALFNQGVSLDDVRTAISNANVRKPQGALEDGTHRWQIQTNDELKTAAEYQPLIIHYNNGGAVRLGDVATVTDSVQDVRNAGMTNAKPAILLMIRKLPEANIIQTVDSIRAKLPELQETIPAAIDLQIAQDRSPTIRASLEEVEQTLIISVALVILVVFLFLRSGRATIIPAVAVPVSLIGTFAAMYLCGFSLNNLSLMALTIATGFVVDDAIVVLENIARHLEAGMKPLQAALQGTREVGFTVLSMSLSLVAVFLPLLLMGGLPGRLLREFAVTLSVAIGISLLVSLTLTPMMCGWMLKASKPREQKRLRGFGRMLVALQQGYGKSLKWVLNHTRLVGVVLLGTIALNIWLYISIPKTFFPEQDTGVLMGGIQADQSISFQAMRGKLQDFMKIIRDDPAVDNVTGFTGGSRVNSGMMFITLKPRGERSETAQQIIDRLRVKLAKEPGANLFLMAVQDIRVGGRQSNASYQYTLLSDDLAALREWEPKIRKKLATLPELADVNSDQQDNGAEMNLVYDRDTMARLGIDVQAANSLLNNAFGQRQISTIYQPMNQYKVVMEVDPRYTQDISALEKMFVINNEGKAIPLSYFAKWQPANAPLSVNHQGLSAASTISFNLPTGKSLSDASAAIDRAMTQLGVPSTVRGSFAGTAQVFQETMNSQVILIIAAIATVYIVLGILYESYVHPLTILSTLPSAGVGALLALELFNAPFSLIALIGIMLLIGIVKKNAIMMVDFALEAQRHGNLTPQEAIFQACLLRFRPIMMTTLAALFGALPLVLSGGDGSELRQPLGITIVGGLVMSQLLTLYTTPVVYLFFDRLRLRFSRKPKQTVTE.

Helical transmembrane passes span 3–23 (FFAL…AITL), 333–353 (EVEQ…FLFL), 360–380 (IIPA…MYLC), 387–407 (LSLM…IVVL), 431–451 (VGFT…PLLL), 463–483 (FAVT…TLTP), 528–548 (LVGV…ISIP), 853–873 (VILI…LYES), 875–895 (VHPL…LLAL), 897–917 (LFNA…IGIV), 953–973 (PIMM…LSGG), and 984–1004 (ITIV…TPVV).

It belongs to the resistance-nodulation-cell division (RND) (TC 2.A.6) family. MdtC subfamily. As to quaternary structure, part of a tripartite efflux system composed of MdtA, MdtB and MdtC. MdtC forms a heteromultimer with MdtB.

It localises to the cell inner membrane. The MdtABC tripartite complex confers resistance against novobiocin and deoxycholate. This is Multidrug resistance protein MdtC from Escherichia coli (strain 55989 / EAEC).